The sequence spans 1164 residues: DNA-directed RNA polymerase 132 kDa polypeptide (1164 aa).

This sequence belongs to the RNA polymerase beta chain family. In terms of assembly, the DNA-dependent RNA polymerase used for intermediate and late genes expression consists of eight subunits (147) kDa, (133) kDa, (35) kDa, (30) kDa, (22) kDa, (19) kDa, (18) kDa and (7) kDa totalling more than 500 kDa in mass. The same holoenzyme, with the addition of the transcription-specificity factor RAP94, is used for early gene expression.

Its subcellular location is the virion. It carries out the reaction RNA(n) + a ribonucleoside 5'-triphosphate = RNA(n+1) + diphosphate. Part of the DNA-dependent RNA polymerase which catalyzes the transcription of viral DNA into RNA using the four ribonucleoside triphosphates as substrates. Responsible for the transcription of early, intermediate and late genes. DNA-dependent RNA polymerase associates with the early transcription factor (ETF), itself composed of D6 and A7, thereby allowing the early genes transcription. Late transcription, and probably also intermediate transcription, require newly synthesized RNA polymerase. The protein is DNA-directed RNA polymerase 132 kDa polypeptide (RPO132) of Cowpox virus (strain GRI-90 / Grishak) (CPV).